We begin with the raw amino-acid sequence, 282 residues long: sn-glycerol-3-phosphate transport system permease protein UgpE (282 aa).

6 helical membrane passes run 14-34 (LILI…FVAS), 86-106 (MAIA…IVFF), 112-132 (MFFF…RILP), 146-168 (YAGL…QFFL), 201-221 (IAAL…WPLL), and 248-268 (WNYV…VVVL). In terms of domain architecture, ABC transmembrane type-1 spans 78–269 (LWNSFVVAMA…IPLILVVVLM (192 aa)).

Belongs to the binding-protein-dependent transport system permease family. As to quaternary structure, the complex is composed of two ATP-binding proteins (UgpC), two transmembrane proteins (UgpA and UgpE) and a solute-binding protein (UgpB).

It localises to the cell inner membrane. Part of the ABC transporter complex UgpBAEC involved in sn-glycerol-3-phosphate (G3P) import. Probably responsible for the translocation of the substrate across the membrane. The sequence is that of sn-glycerol-3-phosphate transport system permease protein UgpE (ugpE) from Brucella abortus (strain 2308).